A 452-amino-acid chain; its full sequence is MGRRYFGTDGIRGKVGDAPITPDFVLRLGYAAGKVLASAPGRAASGARPTVLIGKDTRVSGYMLEAALEAGFSAAGVDVMLAGPMPTPGVAYLTRALRLSAGVVISASHNPYHDNGIKFFSADGNKLPDEIEAEIEAWLDKPLDCAASDGLGKARRLDDAAGRYIEFCKSTFPAAFDLRGMKLVVDCAHGAAYQVAPHVFHELGADVIPIGVAPNGFNINDGVGATAPDALMRAVRANHADLGIALDGDADRLLVVDHTGRLYNGDELLYVLVKDRIATNGQVEGAVGTLMTNFAVEVALKEAGVQFVRAAVGDRYVLEQLRERGWQLGAEGSGHILSLDRHSTGDGIVSALLVLAALKRSGKTLAQMLEGVTLFPQKLINVRMKPGADWKGSEAIRRAIDSAEQALSGSGRVLIRASGTEPVLRVMVEARQATDANRHAEAIADAVKQATA.

Ser-108 serves as the catalytic Phosphoserine intermediate. The Mg(2+) site is built by Ser-108, Asp-247, Asp-249, and Asp-251. Ser-108 carries the post-translational modification Phosphoserine.

Belongs to the phosphohexose mutase family. Mg(2+) serves as cofactor. In terms of processing, activated by phosphorylation.

The catalysed reaction is alpha-D-glucosamine 1-phosphate = D-glucosamine 6-phosphate. Catalyzes the conversion of glucosamine-6-phosphate to glucosamine-1-phosphate. The polypeptide is Phosphoglucosamine mutase (Burkholderia mallei (strain NCTC 10247)).